The sequence spans 432 residues: FMRFamide peptide receptor frpr-18 (432 aa).

At 1 to 8 (MESQQLMA) the chain is on the extracellular side. A helical transmembrane segment spans residues 9–29 (CAILVIVLVGIFGNSLSFILF). The Cytoplasmic segment spans residues 30 to 42 (SRPHMRSSSVNVL). Residues 43-63 (LCALSFFDFSLLTLSIPIFVI) form a helical membrane-spanning segment. The Extracellular portion of the chain corresponds to 64–84 (PNLDLWANDLSLSTYMAYILK). The helical transmembrane segment at 85 to 105 (LIYPINLMMQTCSVYIMVMIT) threads the bilayer. Residues 106–128 (LERWVAVCRPLQVRVWCTPRKSR) lie on the Cytoplasmic side of the membrane. A helical membrane pass occupies residues 129–149 (NAILVIIVSAFLYNFVRFFEY). The Extracellular segment spans residues 150–176 (RFVVTESGALYEKWLRDPGKHRWYYVG). Residues 177–197 (YYTILYIVTHFLVPFSVMAFA) traverse the membrane as a helical segment. Residues 198–225 (NGHVIVAMCKLSKTRQMLTRQQQREQST) are Cytoplasmic-facing. Residues 226-246 (TVMLLIVTFVFAICNTLPFLL) form a helical membrane-spanning segment. The Extracellular portion of the chain corresponds to 247–271 (NVSESIFPTLFQDESTRGLAYWLND). Residues 272–292 (LSNLLVVLNSGTTFIIYFTFS) form a helical membrane-spanning segment. The Cytoplasmic segment spans residues 293 to 432 (EKYRQTLVFI…GEPDSPCQPC (140 aa)). Disordered regions lie at residues 328–349 (ISSE…SSRS) and 388–411 (KLPS…GMPE).

Belongs to the G-protein coupled receptor 1 family. As to expression, expressed in a subset of neurons in the head, midbody, and tail, including AIY, ASI, BAG, URA, CAN, I6, PVQ, DVA, RIM, and VC, and in the anal sphincter and intestinal muscles. Expression from the ASI neurons is involved in promoting arousal.

It is found in the cell membrane. G-protein coupled receptor for flp-2 neuropeptides. May act through the G(q) alpha type of G proteins. Involved in mediating arousal from the sleep-like state called lethargus, which occurs during molting between larval and adult stages, in part by regulating touch sensitivity, and working in concert with neuropeptide pdf-1. The sequence is that of FMRFamide peptide receptor frpr-18 from Caenorhabditis elegans.